Consider the following 423-residue polypeptide: UDP-N-acetylglucosamine 1-carboxyvinyltransferase 2 (423 aa).

23–24 (KN) is a phosphoenolpyruvate binding site. Residue Arg-96 participates in UDP-N-acetyl-alpha-D-glucosamine binding. Cys-120 functions as the Proton donor in the catalytic mechanism. Position 120 is a 2-(S-cysteinyl)pyruvic acid O-phosphothioketal (Cys-120). UDP-N-acetyl-alpha-D-glucosamine-binding positions include 125-129 (RPIDL), Asp-309, and Val-331.

It belongs to the EPSP synthase family. MurA subfamily.

It is found in the cytoplasm. The catalysed reaction is phosphoenolpyruvate + UDP-N-acetyl-alpha-D-glucosamine = UDP-N-acetyl-3-O-(1-carboxyvinyl)-alpha-D-glucosamine + phosphate. It functions in the pathway cell wall biogenesis; peptidoglycan biosynthesis. Cell wall formation. Adds enolpyruvyl to UDP-N-acetylglucosamine. This Streptococcus agalactiae serotype III (strain NEM316) protein is UDP-N-acetylglucosamine 1-carboxyvinyltransferase 2.